The following is a 712-amino-acid chain: Ribosomal RNA large subunit methyltransferase K/L (712 aa).

Positions 46-157 constitute a THUMP domain; it reads GAYQALLHSR…RENMVVSLDL (112 aa).

It belongs to the methyltransferase superfamily. RlmKL family.

The protein localises to the cytoplasm. It catalyses the reaction guanosine(2445) in 23S rRNA + S-adenosyl-L-methionine = N(2)-methylguanosine(2445) in 23S rRNA + S-adenosyl-L-homocysteine + H(+). The catalysed reaction is guanosine(2069) in 23S rRNA + S-adenosyl-L-methionine = N(2)-methylguanosine(2069) in 23S rRNA + S-adenosyl-L-homocysteine + H(+). Specifically methylates the guanine in position 2445 (m2G2445) and the guanine in position 2069 (m7G2069) of 23S rRNA. The polypeptide is Ribosomal RNA large subunit methyltransferase K/L (Actinobacillus pleuropneumoniae serotype 7 (strain AP76)).